The chain runs to 372 residues: Formylglycine-generating enzyme (372 aa).

The N-terminal stretch at 1–31 is a signal peptide; it reads MAAPAREPALRCCIRLARVFLLLVLACEVAG. A disulfide bond links Cys48 and Cys50. The segment at 61-80 is disordered; the sequence is SSAAAQRYSREANAPGLTSG. Ca(2+) is bound at residue Glu128. N-linked (GlcNAc...) asparagine glycosylation is present at Asn139. 2 disulfide bridges follow: Cys216-Cys363 and Cys233-Cys344. The Ca(2+) site is built by Asn257, Ile258, Asp271, Phe273, Asn291, Gly294, and Glu298. Cu(2+)-binding residues include Cys334 and Cys339. An interaction with sulfatases region spans residues 339 to 358; sequence CYRYRCAARSQNTPDSSASN.

Belongs to the sulfatase-modifying factor family. In terms of assembly, monomer, homodimer and heterodimer with SUMF2. Cu(2+) serves as cofactor. N-glycosylated. Contains high-mannose-type oligosaccharides.

Its subcellular location is the endoplasmic reticulum lumen. It catalyses the reaction L-cysteinyl-[sulfatase] + 2 a thiol + O2 = an organic disulfide + 3-oxo-L-alanyl-[sulfatase] + hydrogen sulfide + H2O + H(+). It participates in protein modification; sulfatase oxidation. Functionally, oxidase that catalyzes the conversion of cysteine to 3-oxoalanine on target proteins, using molecular oxygen and an unidentified reducing agent. 3-oxoalanine modification, which is also named formylglycine (fGly), occurs in the maturation of arylsulfatases and some alkaline phosphatases that use the hydrated form of 3-oxoalanine as a catalytic nucleophile. Known substrates include GALNS, ARSA, STS and ARSE. The polypeptide is Formylglycine-generating enzyme (Mus musculus (Mouse)).